A 106-amino-acid chain; its full sequence is Large ribosomal subunit protein P1A (106 aa).

Ser-2 carries the post-translational modification N-acetylserine. Residues 73-106 (GGVAGGEAGEAEAEKEEEEAKEESDDDMGFGLFD) form a disordered region. Acidic residues predominate over residues 81–100 (GEAEAEKEEEEAKEESDDDM). Ser-96 is subject to Phosphoserine.

This sequence belongs to the eukaryotic ribosomal protein P1/P2 family. In terms of assembly, component of the large ribosomal subunit (LSU). Mature yeast ribosomes consist of a small (40S) and a large (60S) subunit. The 40S small subunit contains 1 molecule of ribosomal RNA (18S rRNA) and 33 different proteins (encoded by 57 genes). The large 60S subunit contains 3 rRNA molecules (25S, 5.8S and 5S rRNA) and 46 different proteins (encoded by 81 genes). The 5 acidic ribosomal P-proteins form the stalk structure of the 60S subunit. They are organized as a pentameric complex in which uL10/P0 interacts with 2 heterodimers, P1A-P2B and P1B-P2A. Post-translationally, N-terminally acetylated by acetyltransferase NatA.

The protein resides in the cytoplasm. Its function is as follows. Component of the ribosome, a large ribonucleoprotein complex responsible for the synthesis of proteins in the cell. The small ribosomal subunit (SSU) binds messenger RNAs (mRNAs) and translates the encoded message by selecting cognate aminoacyl-transfer RNA (tRNA) molecules. The large subunit (LSU) contains the ribosomal catalytic site termed the peptidyl transferase center (PTC), which catalyzes the formation of peptide bonds, thereby polymerizing the amino acids delivered by tRNAs into a polypeptide chain. The nascent polypeptides leave the ribosome through a tunnel in the LSU and interact with protein factors that function in enzymatic processing, targeting, and the membrane insertion of nascent chains at the exit of the ribosomal tunnel. The polypeptide is Large ribosomal subunit protein P1A (Saccharomyces cerevisiae (strain ATCC 204508 / S288c) (Baker's yeast)).